A 178-amino-acid chain; its full sequence is CASP-like protein 2A2 (178 aa).

Residues 1–22 are Cytoplasmic-facing; it reads MDKTDQTAIDGSALELNRTEKT. Residues 23-43 traverse the membrane as a helical segment; sequence VEAVLRVASMALSITGLVIMI. Over 44 to 69 the chain is Extracellular; that stretch reads KNSISNDFGSLSYSNLGAFMYLVGAN. The chain crosses the membrane as a helical span at residues 70 to 90; it reads GVCAAYSLLSALAILALPCPI. The Cytoplasmic segment spans residues 91–96; it reads SKVQVR. A helical transmembrane segment spans residues 97–117; it reads TLFLLDQVVTYVVLAAGAVSA. Over 118–145 the chain is Extracellular; the sequence is ETVYLAYYGNIPITWSSACDSYGIFCHK. Residues 146-166 traverse the membrane as a helical segment; it reads ALISVVFTFVVSLLYMLLSLI. At 167 to 178 the chain is on the cytoplasmic side; that stretch reads SSYRLFSRFEAP.

This sequence belongs to the Casparian strip membrane proteins (CASP) family. In terms of assembly, homodimer and heterodimers.

The protein localises to the cell membrane. The sequence is that of CASP-like protein 2A2 from Arabidopsis lyrata subsp. lyrata (Lyre-leaved rock-cress).